The following is a 321-amino-acid chain: tRNA(Ile)-lysidine synthase (321 aa).

30–35 (SGGSDS) is an ATP binding site.

The protein belongs to the tRNA(Ile)-lysidine synthase family.

Its subcellular location is the cytoplasm. It catalyses the reaction cytidine(34) in tRNA(Ile2) + L-lysine + ATP = lysidine(34) in tRNA(Ile2) + AMP + diphosphate + H(+). Ligates lysine onto the cytidine present at position 34 of the AUA codon-specific tRNA(Ile) that contains the anticodon CAU, in an ATP-dependent manner. Cytidine is converted to lysidine, thus changing the amino acid specificity of the tRNA from methionine to isoleucine. In Chlamydia muridarum (strain MoPn / Nigg), this protein is tRNA(Ile)-lysidine synthase.